The primary structure comprises 179 residues: UPF0398 protein SSU05_0416 (179 aa).

It belongs to the UPF0398 family.

The protein is UPF0398 protein SSU05_0416 of Streptococcus suis (strain 05ZYH33).